We begin with the raw amino-acid sequence, 321 residues long: tRNA-dihydrouridine synthase B (321 aa).

Residues 16-18 (PMA) and glutamine 70 contribute to the FMN site. The active-site Proton donor is cysteine 100. Residues lysine 139, 200 to 202 (NGD), and 224 to 225 (GR) contribute to the FMN site.

It belongs to the Dus family. DusB subfamily. The cofactor is FMN.

It catalyses the reaction a 5,6-dihydrouridine in tRNA + NAD(+) = a uridine in tRNA + NADH + H(+). The enzyme catalyses a 5,6-dihydrouridine in tRNA + NADP(+) = a uridine in tRNA + NADPH + H(+). In terms of biological role, catalyzes the synthesis of 5,6-dihydrouridine (D), a modified base found in the D-loop of most tRNAs, via the reduction of the C5-C6 double bond in target uridines. This chain is tRNA-dihydrouridine synthase B, found in Salmonella typhi.